The sequence spans 883 residues: Valine--tRNA ligase (883 aa).

Positions 46-56 match the 'HIGH' region motif; sequence PNVTGKLHLGH. A 'KMSKS' region motif is present at residues 520–524; that stretch reads KMSKS. Lys-523 contributes to the ATP binding site. The stretch at 809–844 forms a coiled coil; sequence LADLLNVEEELARLEKELAKWQKELDMVGKKLSNER.

The protein belongs to the class-I aminoacyl-tRNA synthetase family. ValS type 1 subfamily. In terms of assembly, monomer.

It is found in the cytoplasm. It carries out the reaction tRNA(Val) + L-valine + ATP = L-valyl-tRNA(Val) + AMP + diphosphate. Functionally, catalyzes the attachment of valine to tRNA(Val). As ValRS can inadvertently accommodate and process structurally similar amino acids such as threonine, to avoid such errors, it has a 'posttransfer' editing activity that hydrolyzes mischarged Thr-tRNA(Val) in a tRNA-dependent manner. In Streptococcus agalactiae serotype V (strain ATCC BAA-611 / 2603 V/R), this protein is Valine--tRNA ligase.